The primary structure comprises 1098 residues: Tudor domain-containing protein 7 (1098 aa).

HTH OST-type domains follow at residues 3–76 and 233–302; these read EGDL…YAMA and KMDE…YPAK. The residue at position 319 (Ser319) is a Phosphoserine. Positions 337–406 constitute an HTH OST-type 3 domain; sequence MAGDFKEKVA…PQKAILYAKL (70 aa). Tudor domains follow at residues 513-570 and 703-760; these read AVNV…FCSL and LPFC…FLQE. The residue at position 859 (Ser859) is a Phosphoserine. Positions 861–1098 are interaction with CDK17; sequence NSKNGNMRVS…EYLIELSKVN (238 aa). Positions 893-1098 are interaction with CABLES1; that stretch reads TSSFSTEELP…EYLIELSKVN (206 aa).

The protein belongs to the TDRD7 family. As to quaternary structure, found in a mRNP complex, at least composed of TDRD1, TDRD6, TDRD7 and DDX4. Found in a complex containing CABLES1, CDK16 and CDK17. Interacts with CABLES1, CDK17 and PIWIL1.

It is found in the cytoplasm. In terms of biological role, component of specific cytoplasmic RNA granules involved in post-transcriptional regulation of specific genes: probably acts by binding to specific mRNAs and regulating their translation. Required for lens transparency during lens development, by regulating translation of genes such as CRYBB3 and HSPB1 in the developing lens. Also required during spermatogenesis. The chain is Tudor domain-containing protein 7 (TDRD7) from Pongo abelii (Sumatran orangutan).